The primary structure comprises 273 residues: Neuferricin (273 aa).

The signal sequence occupies residues 1 to 22 (MLGYLAAAALCLAAVLLMRLDH). One can recognise a Cytochrome b5 heme-binding domain in the interval 44-143 (GRLMSKEELS…QNYITIGKLT (100 aa)).

The protein belongs to the cytochrome b5 family. MAPR subfamily.

It is found in the secreted. In terms of biological role, heme-binding protein which promotes neuronal but not astrocyte differentiation. The sequence is that of Neuferricin (cyb5d2) from Xenopus tropicalis (Western clawed frog).